Here is a 182-residue protein sequence, read N- to C-terminus: Ribulose bisphosphate carboxylase small subunit, chloroplastic (182 aa).

The transit peptide at 1-58 directs the protein to the chloroplast; the sequence is MASSMLSTATVASINRVSPAQATMVAPFTGLKSTPVFPTTRKTNSDITSITSNGGKVQ.

Belongs to the RuBisCO small chain family. Heterohexadecamer of 8 large and 8 small subunits.

It localises to the plastid. The protein resides in the chloroplast. Functionally, ruBisCO catalyzes two reactions: the carboxylation of D-ribulose 1,5-bisphosphate, the primary event in carbon dioxide fixation, as well as the oxidative fragmentation of the pentose substrate. Both reactions occur simultaneously and in competition at the same active site. Although the small subunit is not catalytic it is essential for maximal activity. The protein is Ribulose bisphosphate carboxylase small subunit, chloroplastic of Manihot esculenta (Cassava).